The chain runs to 376 residues: UDP-N-acetylenolpyruvoylglucosamine reductase (376 aa).

An FAD-binding PCMH-type domain is found at 48–219 (VGGPARHLVI…LDVTMQFNLG (172 aa)). The active site involves Arg-196. Catalysis depends on Ser-274, which acts as the Proton donor. Glu-368 is a catalytic residue.

This sequence belongs to the MurB family. The cofactor is FAD.

It localises to the cytoplasm. It carries out the reaction UDP-N-acetyl-alpha-D-muramate + NADP(+) = UDP-N-acetyl-3-O-(1-carboxyvinyl)-alpha-D-glucosamine + NADPH + H(+). Its pathway is cell wall biogenesis; peptidoglycan biosynthesis. In terms of biological role, cell wall formation. The chain is UDP-N-acetylenolpyruvoylglucosamine reductase from Cutibacterium acnes (strain DSM 16379 / KPA171202) (Propionibacterium acnes).